The sequence spans 438 residues: Asparagine--tRNA ligase (438 aa).

Belongs to the class-II aminoacyl-tRNA synthetase family. In terms of assembly, homodimer.

The protein localises to the cytoplasm. It carries out the reaction tRNA(Asn) + L-asparagine + ATP = L-asparaginyl-tRNA(Asn) + AMP + diphosphate + H(+). The chain is Asparagine--tRNA ligase from Thermus thermophilus (strain ATCC BAA-163 / DSM 7039 / HB27).